The chain runs to 318 residues: NADH-ubiquinone oxidoreductase chain 1 (318 aa).

Helical transmembrane passes span 2-22 (PMIN…FLML), 69-89 (ALYI…WTPL), 100-120 (LGLL…LWSG), 147-167 (AIIL…TLIT), 171-191 (HIWL…STLA), 222-242 (LFFM…TMIF), 253-273 (ELYT…FLWI), and 294-314 (LPLT…IASI).

The protein belongs to the complex I subunit 1 family. As to quaternary structure, core subunit of respiratory chain NADH dehydrogenase (Complex I) which is composed of 45 different subunits.

It is found in the mitochondrion inner membrane. The enzyme catalyses a ubiquinone + NADH + 5 H(+)(in) = a ubiquinol + NAD(+) + 4 H(+)(out). Functionally, core subunit of the mitochondrial membrane respiratory chain NADH dehydrogenase (Complex I) which catalyzes electron transfer from NADH through the respiratory chain, using ubiquinone as an electron acceptor. Essential for the catalytic activity and assembly of complex I. This Hylobates lar (Lar gibbon) protein is NADH-ubiquinone oxidoreductase chain 1 (MT-ND1).